A 268-amino-acid polypeptide reads, in one-letter code: Pantothenate synthetase (268 aa).

ATP is bound at residue 18-25 (MGYLHEGH). The Proton donor role is filled by H25. (R)-pantoate is bound at residue Q49. Beta-alanine is bound at residue Q49. 135-138 (GQKD) contributes to the ATP binding site. Q141 provides a ligand contact to (R)-pantoate. Residues V164 and 172–175 (LSSR) each bind ATP.

The protein belongs to the pantothenate synthetase family. Homodimer.

It is found in the cytoplasm. It carries out the reaction (R)-pantoate + beta-alanine + ATP = (R)-pantothenate + AMP + diphosphate + H(+). The protein operates within cofactor biosynthesis; (R)-pantothenate biosynthesis; (R)-pantothenate from (R)-pantoate and beta-alanine: step 1/1. Catalyzes the condensation of pantoate with beta-alanine in an ATP-dependent reaction via a pantoyl-adenylate intermediate. The protein is Pantothenate synthetase of Dehalococcoides mccartyi (strain ATCC BAA-2266 / KCTC 15142 / 195) (Dehalococcoides ethenogenes (strain 195)).